The primary structure comprises 325 residues: Elongation factor P--(R)-beta-lysine ligase (325 aa).

Substrate is bound at residue 76-78 (SPE). ATP is bound by residues 100–102 (RNE) and Asn109. Residue Tyr118 coordinates substrate. Residue 244 to 245 (EL) coordinates ATP. Glu251 contacts substrate. Gly300 is a binding site for ATP.

It belongs to the class-II aminoacyl-tRNA synthetase family. EpmA subfamily. In terms of assembly, homodimer.

It catalyses the reaction D-beta-lysine + L-lysyl-[protein] + ATP = N(6)-((3R)-3,6-diaminohexanoyl)-L-lysyl-[protein] + AMP + diphosphate + H(+). With EpmB is involved in the beta-lysylation step of the post-translational modification of translation elongation factor P (EF-P). Catalyzes the ATP-dependent activation of (R)-beta-lysine produced by EpmB, forming a lysyl-adenylate, from which the beta-lysyl moiety is then transferred to the epsilon-amino group of a conserved specific lysine residue in EF-P. The chain is Elongation factor P--(R)-beta-lysine ligase from Klebsiella pneumoniae subsp. pneumoniae (strain ATCC 700721 / MGH 78578).